A 131-amino-acid polypeptide reads, in one-letter code: D-ribose pyranase (131 aa).

H20 acts as the Proton donor in catalysis. Residues D28, H98, and 120 to 122 each bind substrate; that span reads YSN.

Belongs to the RbsD / FucU family. RbsD subfamily. In terms of assembly, homodecamer.

It localises to the cytoplasm. The enzyme catalyses beta-D-ribopyranose = beta-D-ribofuranose. The protein operates within carbohydrate metabolism; D-ribose degradation; D-ribose 5-phosphate from beta-D-ribopyranose: step 1/2. Its function is as follows. Catalyzes the interconversion of beta-pyran and beta-furan forms of D-ribose. The sequence is that of D-ribose pyranase from Limosilactobacillus reuteri (strain DSM 20016) (Lactobacillus reuteri).